Consider the following 160-residue polypeptide: Endoribonuclease YbeY (160 aa).

Residues H125, H129, and H135 each coordinate Zn(2+).

It belongs to the endoribonuclease YbeY family. Requires Zn(2+) as cofactor.

Its subcellular location is the cytoplasm. Functionally, single strand-specific metallo-endoribonuclease involved in late-stage 70S ribosome quality control and in maturation of the 3' terminus of the 16S rRNA. The chain is Endoribonuclease YbeY from Leuconostoc mesenteroides subsp. mesenteroides (strain ATCC 8293 / DSM 20343 / BCRC 11652 / CCM 1803 / JCM 6124 / NCDO 523 / NBRC 100496 / NCIMB 8023 / NCTC 12954 / NRRL B-1118 / 37Y).